The sequence spans 78 residues: Translational regulator CsrA (78 aa).

The protein belongs to the CsrA/RsmA family. Homodimer; the beta-strands of each monomer intercalate to form a hydrophobic core, while the alpha-helices form wings that extend away from the core.

The protein localises to the cytoplasm. Its function is as follows. A translational regulator that binds mRNA to regulate translation initiation and/or mRNA stability. Usually binds in the 5'-UTR at or near the Shine-Dalgarno sequence preventing ribosome-binding, thus repressing translation. Its main target seems to be the major flagellin gene, while its function is anatagonized by FliW. This is Translational regulator CsrA from Borrelia turicatae (strain 91E135).